Consider the following 313-residue polypeptide: E3 ubiquitin-protein ligase siah2 (313 aa).

The interval 1–49 (MSRPSSAGPCASKPCGKQKQPPPPPPHAPSLPATISGGPGASAPPAPTA) is disordered. Over residues 20–29 (QPPPPPPHAP) the composition is skewed to pro residues. The RING-type zinc finger occupies 69–104 (CPVCFDYVLPPILQCQAGHLVCNQCRQKLSCCPTCR). Positions 119–311 (VASAVLFPCK…LGINVTISTC (193 aa)) are SBD. The SIAH-type zinc-finger motif lies at 122–182 (AVLFPCKYAS…VMQHLTHSHK (61 aa)). Zn(2+) is bound by residues Cys127, Cys134, His146, Cys150, Cys157, Cys164, His176, and His181.

It belongs to the SINA (Seven in absentia) family. Homodimer. Widely expressed in early embryos until stage 40. It is then expressed in brain, spinal cord and in the developing and mature eye.

The protein localises to the cytoplasm. It catalyses the reaction S-ubiquitinyl-[E2 ubiquitin-conjugating enzyme]-L-cysteine + [acceptor protein]-L-lysine = [E2 ubiquitin-conjugating enzyme]-L-cysteine + N(6)-ubiquitinyl-[acceptor protein]-L-lysine.. The protein operates within protein modification; protein ubiquitination. E3 ubiquitin-protein ligase that mediates ubiquitination and subsequent proteasomal degradation of target proteins. E3 ubiquitin ligases accept ubiquitin from an E2 ubiquitin-conjugating enzyme in the form of a thioester and then directly transfers the ubiquitin to targeted substrates. Involved in eye morphogenesis, probably triggers the ubiquitin-mediated degradation of different substrates. May play a role in the regulation of the cellular clock function. In Xenopus laevis (African clawed frog), this protein is E3 ubiquitin-protein ligase siah2 (siah2).